A 444-amino-acid polypeptide reads, in one-letter code: Tubulin beta-8 chain (444 aa).

An MREI motif motif is present at residues 1–4 (MREI). The GTP site is built by Gln-11, Glu-69, Ser-138, Gly-142, Thr-143, and Gly-144. Glu-69 provides a ligand contact to Mg(2+). Ser-172 bears the Phosphoserine; by CDK1 mark. The GTP site is built by Asn-204 and Asn-226. Residue Glu-436 is modified to 5-glutamyl polyglutamate.

Belongs to the tubulin family. In terms of assembly, dimer of alpha and beta chains. A typical microtubule is a hollow water-filled tube with an outer diameter of 25 nm and an inner diameter of 15 nM. Alpha-beta heterodimers associate head-to-tail to form protofilaments running lengthwise along the microtubule wall with the beta-tubulin subunit facing the microtubule plus end conferring a structural polarity. Microtubules usually have 13 protofilaments but different protofilament numbers can be found in some organisms and specialized cells. Mg(2+) is required as a cofactor. In terms of processing, some glutamate residues at the C-terminus are polyglycylated, resulting in polyglycine chains on the gamma-carboxyl group. Glycylation is mainly limited to tubulin incorporated into axonemes (cilia and flagella) whereas glutamylation is prevalent in neuronal cells, centrioles, axonemes, and the mitotic spindle. Both modifications can coexist on the same protein on adjacent residues, and lowering polyglycylation levels increases polyglutamylation, and reciprocally. Cilia and flagella glycylation is required for their stability and maintenance. Flagella glycylation controls sperm motility. Some glutamate residues at the C-terminus are polyglutamylated, resulting in polyglutamate chains on the gamma-carboxyl group. Polyglutamylation plays a key role in microtubule severing by spastin (SPAST). SPAST preferentially recognizes and acts on microtubules decorated with short polyglutamate tails: severing activity by SPAST increases as the number of glutamates per tubulin rises from one to eight, but decreases beyond this glutamylation threshold. Glutamylation is also involved in cilia motility. Post-translationally, phosphorylated on Ser-172 by CDK1 during the cell cycle, from metaphase to telophase, but not in interphase. This phosphorylation inhibits tubulin incorporation into microtubules.

The protein resides in the cytoplasm. It localises to the cytoskeleton. The protein localises to the spindle. Functionally, tubulin is the major constituent of microtubules, a cylinder consisting of laterally associated linear protofilaments composed of alpha- and beta-tubulin heterodimers. Microtubules grow by the addition of GTP-tubulin dimers to the microtubule end, where a stabilizing cap forms. Below the cap, tubulin dimers are in GDP-bound state, owing to GTPase activity of alpha-tubulin. Has a key role in meiotic spindle assembly and oocyte maturation. This chain is Tubulin beta-8 chain (TUBB8), found in Papio hamadryas (Hamadryas baboon).